A 531-amino-acid polypeptide reads, in one-letter code: Peptide chain release factor 3 (531 aa).

Positions 13-282 (AKRRTFAIIS…TLIKYSPPPK (270 aa)) constitute a tr-type G domain. GTP is bound by residues 22-29 (SHPDAGKT), 90-94 (DTPGH), and 144-147 (NKLD).

Belongs to the TRAFAC class translation factor GTPase superfamily. Classic translation factor GTPase family. PrfC subfamily.

Its subcellular location is the cytoplasm. Increases the formation of ribosomal termination complexes and stimulates activities of RF-1 and RF-2. It binds guanine nucleotides and has strong preference for UGA stop codons. It may interact directly with the ribosome. The stimulation of RF-1 and RF-2 is significantly reduced by GTP and GDP, but not by GMP. This chain is Peptide chain release factor 3, found in Psychrobacter arcticus (strain DSM 17307 / VKM B-2377 / 273-4).